Consider the following 692-residue polypeptide: Elongation factor G (692 aa).

One can recognise a tr-type G domain in the interval 8–282 (ERTRNIGIMA…AIVDYLPAPT (275 aa)). GTP-binding positions include 17-24 (AHIDAGKT), 81-85 (DTPGH), and 135-138 (NKMD).

Belongs to the TRAFAC class translation factor GTPase superfamily. Classic translation factor GTPase family. EF-G/EF-2 subfamily.

Its subcellular location is the cytoplasm. In terms of biological role, catalyzes the GTP-dependent ribosomal translocation step during translation elongation. During this step, the ribosome changes from the pre-translocational (PRE) to the post-translocational (POST) state as the newly formed A-site-bound peptidyl-tRNA and P-site-bound deacylated tRNA move to the P and E sites, respectively. Catalyzes the coordinated movement of the two tRNA molecules, the mRNA and conformational changes in the ribosome. The sequence is that of Elongation factor G from Desulforamulus reducens (strain ATCC BAA-1160 / DSM 100696 / MI-1) (Desulfotomaculum reducens).